The sequence spans 130 residues: Phosphoribosyl-ATP pyrophosphatase (130 aa).

It belongs to the PRA-PH family.

Its subcellular location is the cytoplasm. It carries out the reaction 1-(5-phospho-beta-D-ribosyl)-ATP + H2O = 1-(5-phospho-beta-D-ribosyl)-5'-AMP + diphosphate + H(+). Its pathway is amino-acid biosynthesis; L-histidine biosynthesis; L-histidine from 5-phospho-alpha-D-ribose 1-diphosphate: step 2/9. This chain is Phosphoribosyl-ATP pyrophosphatase, found in Albidiferax ferrireducens (strain ATCC BAA-621 / DSM 15236 / T118) (Rhodoferax ferrireducens).